The chain runs to 163 residues: Lipoprotein signal peptidase (163 aa).

A run of 4 helical transmembrane segments spans residues 9 to 29 (AWPWLWLSVLVILLDQLSKYL), 42 to 62 (ILPFLNFTLNYNTGAAFSFLG), 67 to 87 (WQIIFFAAISFVVSIFLILWL), and 93 to 113 (SEIMMSLGLSLIIGGALGNFI). Residues aspartate 123 and aspartate 141 contribute to the active site. Residues 137–157 (FNVADSAICVGVFLLIVYMLL) form a helical membrane-spanning segment.

This sequence belongs to the peptidase A8 family.

The protein localises to the cell inner membrane. The catalysed reaction is Release of signal peptides from bacterial membrane prolipoproteins. Hydrolyzes -Xaa-Yaa-Zaa-|-(S,diacylglyceryl)Cys-, in which Xaa is hydrophobic (preferably Leu), and Yaa (Ala or Ser) and Zaa (Gly or Ala) have small, neutral side chains.. The protein operates within protein modification; lipoprotein biosynthesis (signal peptide cleavage). Functionally, this protein specifically catalyzes the removal of signal peptides from prolipoproteins. The polypeptide is Lipoprotein signal peptidase (Coxiella burnetii (strain Dugway 5J108-111)).